Reading from the N-terminus, the 700-residue chain is Calpain-2 catalytic subunit (700 aa).

Residue alanine 2 is modified to N-acetylalanine. Residues 2–19 (AGIAAKLAKDREAAEGLG) constitute a propeptide, anchors to the small subunit. A Calpain catalytic domain is found at 45–344 (LFQDPSFPAL…YSRLEICNLT (300 aa)). Ca(2+) is bound by residues glycine 91 and aspartate 96. Cysteine 105 is an active-site residue. Residues glutamate 175, glutamine 229, and lysine 230 each contribute to the Ca(2+) site. Catalysis depends on residues histidine 262 and asparagine 286. Ca(2+)-binding residues include glutamate 292, aspartate 299, and glutamate 323. A domain III region spans residues 345–514 (PDTLTSDSYK…KKADYQVVDD (170 aa)). The segment at 515–529 (EIEANIDEIDISEDD) is linker. The tract at residues 530 to 700 (IDDGFRRLFA…LISWLSFSVL (171 aa)) is domain IV. Residues alanine 542, aspartate 545, glutamate 547, glutamate 552, aspartate 585, aspartate 587, serine 589, lysine 591, glutamate 596, aspartate 615, aspartate 617, serine 619, threonine 621, glutamate 626, aspartate 658, and asparagine 661 each contribute to the Ca(2+) site. EF-hand domains lie at 572–597 (FSIETCKIMVDMLDSDGSGKLGLKEF), 602–637 (TKIQKYQKIYREIDVDRSGTMNSYEMRKALEEAGFK), and 652–672 (DDDLIIDFDNFVRCLIRLETL).

It belongs to the peptidase C2 family. As to quaternary structure, forms a heterodimer with a small (regulatory) subunit (CAPNS1). Interacts with CPEB3; this leads to cleavage of CPEB3. Ca(2+) serves as cofactor. Ubiquitous.

It is found in the cytoplasm. The protein localises to the cell membrane. The enzyme catalyses Broad endopeptidase specificity.. Activated by 200-1000 micromolar concentrations of calcium and inhibited by calpastatin. In terms of biological role, calcium-regulated non-lysosomal thiol-protease which catalyzes limited proteolysis of substrates involved in cytoskeletal remodeling and signal transduction. Proteolytically cleaves MYOC at 'Arg-226'. Proteolytically cleaves CPEB3 following neuronal stimulation which abolishes CPEB3 translational repressor activity, leading to translation of CPEB3 target mRNAs. This chain is Calpain-2 catalytic subunit (CAPN2), found in Bos taurus (Bovine).